Here is a 493-residue protein sequence, read N- to C-terminus: Argininosuccinate lyase (493 aa).

Belongs to the lyase 1 family. Argininosuccinate lyase subfamily.

It localises to the cytoplasm. It catalyses the reaction 2-(N(omega)-L-arginino)succinate = fumarate + L-arginine. Its pathway is amino-acid biosynthesis; L-arginine biosynthesis; L-arginine from L-ornithine and carbamoyl phosphate: step 3/3. This Clavibacter sepedonicus (Clavibacter michiganensis subsp. sepedonicus) protein is Argininosuccinate lyase.